The primary structure comprises 518 residues: Chromosomal replication initiator protein DnaA (518 aa).

The domain I, interacts with DnaA modulators stretch occupies residues 1-73; that stretch reads MTLAEFWPLC…REELAAGRPA (73 aa). The tract at residues 73–180 is domain II; sequence AFVFKPGEGV…DAEEARYEQT (108 aa). The segment at 144–180 is disordered; that stretch reads HEPRQAAGPASRPESAAVAKARTDAQRDAEEARYEQT. The segment covering 164 to 177 has biased composition (basic and acidic residues); the sequence is ARTDAQRDAEEARY. The interval 181–397 is domain III, AAA+ region; that stretch reads NLSPDYTFDT…GAFNRVGASS (217 aa). Residues Gly-225, Gly-227, Lys-228, and Thr-229 each coordinate ATP. The segment at 398–518 is domain IV, binds dsDNA; that stretch reads RFMNRPVIDI…YEKLLILIQN (121 aa).

This sequence belongs to the DnaA family. Oligomerizes as a right-handed, spiral filament on DNA at oriC.

The protein resides in the cytoplasm. Its function is as follows. Plays an essential role in the initiation and regulation of chromosomal replication. ATP-DnaA binds to the origin of replication (oriC) to initiate formation of the DNA replication initiation complex once per cell cycle. Binds the DnaA box (a 9 base pair repeat at the origin) and separates the double-stranded (ds)DNA. Forms a right-handed helical filament on oriC DNA; dsDNA binds to the exterior of the filament while single-stranded (ss)DNA is stabiized in the filament's interior. The ATP-DnaA-oriC complex binds and stabilizes one strand of the AT-rich DNA unwinding element (DUE), permitting loading of DNA polymerase. After initiation quickly degrades to an ADP-DnaA complex that is not apt for DNA replication. Binds acidic phospholipids. The protein is Chromosomal replication initiator protein DnaA of Neisseria gonorrhoeae (strain ATCC 700825 / FA 1090).